We begin with the raw amino-acid sequence, 248 residues long: PF03932 family protein CutC (248 aa).

This sequence belongs to the CutC family.

It is found in the cytoplasm. The chain is PF03932 family protein CutC from Porphyromonas gingivalis (strain ATCC 33277 / DSM 20709 / CIP 103683 / JCM 12257 / NCTC 11834 / 2561).